We begin with the raw amino-acid sequence, 527 residues long: Amine oxidase [flavin-containing] A (527 aa).

Residue M1 is modified to N-acetylmethionine. The Cytoplasmic segment spans residues 1 to 497; the sequence is MASQEKASMA…HSFWERNLPS (497 aa). Phosphoserine is present on S383. C406 carries the S-8alpha-FAD cysteine modification. The helical; Anchor for type IV membrane protein transmembrane segment at 498–518 threads the bilayer; the sequence is VGGLLKIIGFSTSITALWIVV. At 519 to 527 the chain is on the mitochondrial intermembrane side; it reads YKFKLLTRS. Residues 520–522 form an interaction with membrane phospholipid headgroups region; sequence KFK.

It belongs to the flavin monoamine oxidase family. As to quaternary structure, monomer, homo- or heterodimer (containing two subunits of similar size). Each subunit contains a covalently bound flavin. Enzymatically active as monomer. FAD serves as cofactor.

It localises to the mitochondrion outer membrane. The enzyme catalyses a secondary aliphatic amine + O2 + H2O = a primary amine + an aldehyde + H2O2. The catalysed reaction is a primary methyl amine + O2 + H2O = an aldehyde + H2O2 + NH4(+). It carries out the reaction (R)-adrenaline + O2 + H2O = (R)-3,4-dihydroxymandelaldehyde + methylamine + H2O2. It catalyses the reaction dopamine + O2 + H2O = 3,4-dihydroxyphenylacetaldehyde + H2O2 + NH4(+). The enzyme catalyses tyramine + O2 + H2O = (4-hydroxyphenyl)acetaldehyde + H2O2 + NH4(+). The catalysed reaction is (R)-noradrenaline + O2 + H2O = (R)-3,4-dihydroxymandelaldehyde + H2O2 + NH4(+). It carries out the reaction serotonin + O2 + H2O = (5-hydroxyindol-3-yl)acetaldehyde + H2O2 + NH4(+). It catalyses the reaction kynuramine + O2 + H2O = 3-(2-aminophenyl)-3-oxopropanal + H2O2 + NH4(+). The enzyme catalyses tryptamine + O2 + H2O = indole-3-acetaldehyde + H2O2 + NH4(+). The catalysed reaction is 2-phenylethylamine + O2 + H2O = 2-phenylacetaldehyde + H2O2 + NH4(+). Functionally, catalyzes the oxidative deamination of primary and some secondary amine such as neurotransmitters, with concomitant reduction of oxygen to hydrogen peroxide and has important functions in the metabolism of neuroactive and vasoactive amines in the central nervous system and peripheral tissues. Preferentially oxidizes serotonin. Also catalyzes the oxidative deamination of kynuramine to 3-(2-aminophenyl)-3-oxopropanal that can spontaneously condense to 4-hydroxyquinoline. This chain is Amine oxidase [flavin-containing] A, found in Equus caballus (Horse).